Here is a 240-residue protein sequence, read N- to C-terminus: Ribosomal RNA large subunit methyltransferase E (240 aa).

Residues 1-20 (MSKAGGNKGGSRTGGRGGAG) show a composition bias toward gly residues. The disordered stretch occupies residues 1 to 40 (MSKAGGNKGGSRTGGRGGAGSSNLHVRVKKKAGTTKESSR). S-adenosyl-L-methionine is bound by residues Gly92, Trp94, Asp115, Asp131, and Asp155. Lys195 functions as the Proton acceptor in the catalytic mechanism.

Belongs to the class I-like SAM-binding methyltransferase superfamily. RNA methyltransferase RlmE family.

The protein localises to the cytoplasm. It carries out the reaction uridine(2552) in 23S rRNA + S-adenosyl-L-methionine = 2'-O-methyluridine(2552) in 23S rRNA + S-adenosyl-L-homocysteine + H(+). Specifically methylates the uridine in position 2552 of 23S rRNA at the 2'-O position of the ribose in the fully assembled 50S ribosomal subunit. This Brucella ovis (strain ATCC 25840 / 63/290 / NCTC 10512) protein is Ribosomal RNA large subunit methyltransferase E.